The chain runs to 124 residues: Ragulator complex protein LAMTOR3 homolog (124 aa).

Belongs to the LAMTOR3 family. Part of the Ragulator complex composed of Lamtor3, Lamtor2, CG14184, CG14812, and Lamtor4.

In terms of biological role, regulator of the TOR pathway, a signaling cascade that promotes cell growth in response to growth factors, energy levels, and amino acids. As part of the Ragulator complex, may activate the TOR signaling cascade in response to amino acids. The protein is Ragulator complex protein LAMTOR3 homolog of Drosophila melanogaster (Fruit fly).